A 314-amino-acid chain; its full sequence is MQFGIVAAIADGGRTARAGGSVRPPRRPPASHTAWGLPRGRPTGQPHATPTKSGPTSIAYVEVNNDQLANVGRYQLANGANAFDVAIIFAANINWNGSKAVLYNNENVQATLDDAATQIRPLQAKGIKVSLSILGNHQGAGIANFPTQAAAEDFAAQVSATVSKYGLDGVDLDDEYSDYGTNGTPQPNQQSIGWLISALRADVPGKLISFYDIGPASSALSSSSSTIGSKLDYAWNPYYGTYSAPSIPGLDKSRLSAAAVDVQNTPQSTAVSLAQRTKADGYGVFMTYNLPDGDVSPYVSSMTKVLYGQAATYH.

The first 47 residues, 1–47, serve as a signal peptide directing secretion; it reads MQFGIVAAIADGGRTARAGGSVRPPRRPPASHTAWGLPRGRPTGQPH. A disordered region spans residues 14-54; that stretch reads RTARAGGSVRPPRRPPASHTAWGLPRGRPTGQPHATPTKSG. Residues 55-309 enclose the GH18 domain; the sequence is PTSIAYVEVN…SSMTKVLYGQ (255 aa). The active-site Proton donor is the glutamate 175.

It belongs to the glycosyl hydrolase 18 family. As to quaternary structure, monomer.

The protein resides in the secreted. It carries out the reaction an N(4)-(oligosaccharide-(1-&gt;3)-[oligosaccharide-(1-&gt;6)]-beta-D-Man-(1-&gt;4)-beta-D-GlcNAc-(1-&gt;4)-alpha-D-GlcNAc)-L-asparaginyl-[protein] + H2O = an oligosaccharide-(1-&gt;3)-[oligosaccharide-(1-&gt;6)]-beta-D-Man-(1-&gt;4)-D-GlcNAc + N(4)-(N-acetyl-beta-D-glucosaminyl)-L-asparaginyl-[protein]. In terms of biological role, cleaves asparagine-linked oligomannose and hybrid, but not complex, oligosaccharides from glycoproteins. This chain is Endo-beta-N-acetylglucosaminidase, found in Flavobacterium sp. (strain SK1022).